We begin with the raw amino-acid sequence, 87 residues long: Large ribosomal subunit protein bL27 (87 aa).

Residues 1–25 are disordered; it reads MAHKKGASSSRNGRDSNAQRLGVKR. The segment covering 7–19 has biased composition (polar residues); the sequence is ASSSRNGRDSNAQ.

Belongs to the bacterial ribosomal protein bL27 family.

The sequence is that of Large ribosomal subunit protein bL27 from Rhodococcus jostii (strain RHA1).